A 362-amino-acid chain; its full sequence is 3-isopropylmalate dehydrogenase (362 aa).

78-91 (GYKWDSLPPHQRPE) serves as a coordination point for NAD(+). Substrate-binding residues include R98, R108, R136, and D226. D226, D250, and D254 together coordinate Mg(2+). 284–296 (GSAPDIAGLDKAN) is a binding site for NAD(+).

The protein belongs to the isocitrate and isopropylmalate dehydrogenases family. LeuB type 1 subfamily. Homodimer. Mg(2+) is required as a cofactor. Mn(2+) serves as cofactor.

The protein resides in the cytoplasm. It catalyses the reaction (2R,3S)-3-isopropylmalate + NAD(+) = 4-methyl-2-oxopentanoate + CO2 + NADH. The protein operates within amino-acid biosynthesis; L-leucine biosynthesis; L-leucine from 3-methyl-2-oxobutanoate: step 3/4. Its function is as follows. Catalyzes the oxidation of 3-carboxy-2-hydroxy-4-methylpentanoate (3-isopropylmalate) to 3-carboxy-4-methyl-2-oxopentanoate. The product decarboxylates to 4-methyl-2 oxopentanoate. The protein is 3-isopropylmalate dehydrogenase of Trichormus variabilis (strain ATCC 29413 / PCC 7937) (Anabaena variabilis).